A 248-amino-acid polypeptide reads, in one-letter code: Probable transcriptional regulatory protein NGR_c27950 (248 aa).

The protein belongs to the TACO1 family.

The protein resides in the cytoplasm. The chain is Probable transcriptional regulatory protein NGR_c27950 from Sinorhizobium fredii (strain NBRC 101917 / NGR234).